Reading from the N-terminus, the 366-residue chain is Carbamoyl phosphate synthase small chain (366 aa).

Residues 1-171 form a CPSase region; sequence MKKRKLILED…KPYVVPGRGL (171 aa). Positions 46, 220, and 222 each coordinate L-glutamine. One can recognise a Glutamine amidotransferase type-1 domain in the interval 172-359; it reads RVVMVDFGAK…LNLIKASKVK (188 aa). The active-site Nucleophile is the cysteine 247. Positions 248, 251, 289, and 292 each coordinate L-glutamine. Residues histidine 332 and glutamate 334 contribute to the active site.

This sequence belongs to the CarA family. Composed of two chains; the small (or glutamine) chain promotes the hydrolysis of glutamine to ammonia, which is used by the large (or ammonia) chain to synthesize carbamoyl phosphate. Tetramer of heterodimers (alpha,beta)4.

It carries out the reaction hydrogencarbonate + L-glutamine + 2 ATP + H2O = carbamoyl phosphate + L-glutamate + 2 ADP + phosphate + 2 H(+). The enzyme catalyses L-glutamine + H2O = L-glutamate + NH4(+). It functions in the pathway amino-acid biosynthesis; L-arginine biosynthesis; carbamoyl phosphate from bicarbonate: step 1/1. Its pathway is pyrimidine metabolism; UMP biosynthesis via de novo pathway; (S)-dihydroorotate from bicarbonate: step 1/3. In terms of biological role, small subunit of the glutamine-dependent carbamoyl phosphate synthetase (CPSase). CPSase catalyzes the formation of carbamoyl phosphate from the ammonia moiety of glutamine, carbonate, and phosphate donated by ATP, constituting the first step of 2 biosynthetic pathways, one leading to arginine and/or urea and the other to pyrimidine nucleotides. The small subunit (glutamine amidotransferase) binds and cleaves glutamine to supply the large subunit with the substrate ammonia. In Oceanobacillus iheyensis (strain DSM 14371 / CIP 107618 / JCM 11309 / KCTC 3954 / HTE831), this protein is Carbamoyl phosphate synthase small chain.